Consider the following 403-residue polypeptide: Para-nitrophenol 4-monooxygenase (403 aa).

FAD contacts are provided by residues 6-35 (GVVV…VLEA) and 279-289 (FRRGRVVLAGD).

Belongs to the PheA/TfdB FAD monooxygenase family. In terms of assembly, monomer. FAD is required as a cofactor.

The catalysed reaction is 4-nitrophenol + NADPH + O2 + H(+) = 1,4-benzoquinone + nitrite + NADP(+) + H2O. It functions in the pathway xenobiotic degradation; 4-nitrophenol degradation. Involved in the degradation of para-nitrophenol (4-NP). Catalyzes oxidation of 4-nitrophenol (4-NP) at position 4 with concomitant removal of the nitro group as nitrite and production of para-benzoquinone. The polypeptide is Para-nitrophenol 4-monooxygenase (pnpA) (Pseudomonas sp. (strain WBC-3)).